The chain runs to 516 residues: uncharacterized protein (516 aa).

The segment at 1–35 (MAERTSESSSESASFDLEKQQSNHHDRYQSSVSSE) is disordered. Basic and acidic residues predominate over residues 16–28 (DLEKQQSNHHDRY). Position 31 is a phosphoserine (S31). 12 helical membrane-spanning segments follow: residues 77–97 (VAVM…FSGA), 111–131 (VALL…VVWA), 143–163 (MIIA…AKDI), 166–186 (VMIC…TVAG), 198–218 (GLVI…SPIV), 231–251 (WTSY…IIFH), 301–321 (LLIF…VYGI), 345–365 (SLPY…VALF), 386–406 (LPSM…LAWT), 412–432 (IHWI…ITIF), 439–461 (IIDC…RSSF), and 481–501 (AGSL…MLFL).

Belongs to the major facilitator superfamily.

It is found in the membrane. This is an uncharacterized protein from Schizosaccharomyces pombe (strain 972 / ATCC 24843) (Fission yeast).